A 435-amino-acid chain; its full sequence is Serine/threonine-protein kinase 40 (435 aa).

The region spanning 35 to 332 (FVLGPRLGNS…DVLEALSAII (298 aa)) is the Protein kinase domain. Residues 41-49 (LGNSPVPSI) and K66 each bind ATP. The active-site Proton acceptor is the D197.

It belongs to the protein kinase superfamily. CAMK Ser/Thr protein kinase family.

It localises to the nucleus. Its subcellular location is the cytoplasm. The catalysed reaction is L-seryl-[protein] + ATP = O-phospho-L-seryl-[protein] + ADP + H(+). It catalyses the reaction L-threonyl-[protein] + ATP = O-phospho-L-threonyl-[protein] + ADP + H(+). Its function is as follows. May be a negative regulator of NF-kappa-B and p53-mediated gene transcription. In Mus musculus (Mouse), this protein is Serine/threonine-protein kinase 40 (Stk40).